Reading from the N-terminus, the 182-residue chain is uncharacterized protein (182 aa).

2 helical membrane-spanning segments follow: residues 76 to 96 and 114 to 130; these read LLLAMSTLKICPLNLVFLALA and LDLLFVSLTTTACLIGA.

Its subcellular location is the membrane. This is an uncharacterized protein from Saccharomyces cerevisiae (strain ATCC 204508 / S288c) (Baker's yeast).